Consider the following 516-residue polypeptide: GMP synthase [glutamine-hydrolyzing] (516 aa).

The Glutamine amidotransferase type-1 domain maps to 8–198; the sequence is KILILDFGSQ…VVNICGCDTL (191 aa). C84 serves as the catalytic Nucleophile. Catalysis depends on residues H172 and E174. The GMPS ATP-PPase domain maps to 199-391; it reads WNIENIIEND…LGLPYNMLYR (193 aa). ATP is bound at residue 226–232; it reads SGGVDSS.

As to quaternary structure, homodimer.

The enzyme catalyses XMP + L-glutamine + ATP + H2O = GMP + L-glutamate + AMP + diphosphate + 2 H(+). Its pathway is purine metabolism; GMP biosynthesis; GMP from XMP (L-Gln route): step 1/1. Its function is as follows. Catalyzes the synthesis of GMP from XMP. In Francisella tularensis subsp. tularensis (strain WY96-3418), this protein is GMP synthase [glutamine-hydrolyzing].